Reading from the N-terminus, the 155-residue chain is Transcriptional repressor NrdR (155 aa).

A zinc finger lies at 3-34; that stretch reads CPFCGHSNTQVLDTRMSEDGDAVRRRRRCEAC. Residues 49 to 139 form the ATP-cone domain; it reads PAIVKKNGSR…VYRSFEDVSE (91 aa).

This sequence belongs to the NrdR family. The cofactor is Zn(2+).

Negatively regulates transcription of bacterial ribonucleotide reductase nrd genes and operons by binding to NrdR-boxes. The protein is Transcriptional repressor NrdR of Cupriavidus necator (strain ATCC 17699 / DSM 428 / KCTC 22496 / NCIMB 10442 / H16 / Stanier 337) (Ralstonia eutropha).